Here is a 129-residue protein sequence, read N- to C-terminus: SOSS complex subunit C homolog (129 aa).

Residues 105–129 are disordered; sequence RLEPLPSPATTPTTPNAPPSHSISK.

It belongs to the SOSS-C family.

The protein is SOSS complex subunit C homolog of Drosophila simulans (Fruit fly).